The sequence spans 365 residues: Alanine racemase (365 aa).

Residue lysine 32 is the Proton acceptor; specific for D-alanine of the active site. The residue at position 32 (lysine 32) is an N6-(pyridoxal phosphate)lysine. Arginine 128 contributes to the substrate binding site. Tyrosine 257 (proton acceptor; specific for L-alanine) is an active-site residue. Residue methionine 305 participates in substrate binding.

It belongs to the alanine racemase family. Requires pyridoxal 5'-phosphate as cofactor.

It catalyses the reaction L-alanine = D-alanine. The protein operates within amino-acid biosynthesis; D-alanine biosynthesis; D-alanine from L-alanine: step 1/1. Functionally, catalyzes the interconversion of L-alanine and D-alanine. May also act on other amino acids. This chain is Alanine racemase (alr), found in Francisella tularensis subsp. holarctica (strain FTNF002-00 / FTA).